A 547-amino-acid chain; its full sequence is CTP synthase (547 aa).

The segment at 1–267 (MKTKFIFITG…DQKIAIMLRL (267 aa)) is amidoligase domain. Position 14 (S14) interacts with CTP. S14 contributes to the UTP binding site. Residues 15–20 (SLGKGL) and D72 contribute to the ATP site. Mg(2+) is bound by residues D72 and E141. CTP-binding positions include 148-150 (DIE), 188-193 (KTKPTQ), and K224. Residues 188–193 (KTKPTQ) and K224 each bind UTP. The 254-residue stretch at 292 to 545 (TIGIVGKYVD…IRAAKTHPAG (254 aa)) folds into the Glutamine amidotransferase type-1 domain. G354 serves as a coordination point for L-glutamine. C381 acts as the Nucleophile; for glutamine hydrolysis in catalysis. Residues 382–385 (LGMQ), E405, and R473 contribute to the L-glutamine site. Residues H518 and E520 contribute to the active site.

Belongs to the CTP synthase family. As to quaternary structure, homotetramer.

It carries out the reaction UTP + L-glutamine + ATP + H2O = CTP + L-glutamate + ADP + phosphate + 2 H(+). It catalyses the reaction L-glutamine + H2O = L-glutamate + NH4(+). The enzyme catalyses UTP + NH4(+) + ATP = CTP + ADP + phosphate + 2 H(+). The protein operates within pyrimidine metabolism; CTP biosynthesis via de novo pathway; CTP from UDP: step 2/2. Its activity is regulated as follows. Allosterically activated by GTP, when glutamine is the substrate; GTP has no effect on the reaction when ammonia is the substrate. The allosteric effector GTP functions by stabilizing the protein conformation that binds the tetrahedral intermediate(s) formed during glutamine hydrolysis. Inhibited by the product CTP, via allosteric rather than competitive inhibition. Functionally, catalyzes the ATP-dependent amination of UTP to CTP with either L-glutamine or ammonia as the source of nitrogen. Regulates intracellular CTP levels through interactions with the four ribonucleotide triphosphates. The chain is CTP synthase from Nitratidesulfovibrio vulgaris (strain DP4) (Desulfovibrio vulgaris).